The sequence spans 565 residues: Transmembrane 7 superfamily member 3 (565 aa).

The first 21 residues, 1 to 21 (MWRLRLLVLAVLAAGSAEAQA), serve as a signal peptide directing secretion. N-linked (GlcNAc...) asparagine glycosylation is found at Asn-22, Asn-56, Asn-70, and Asn-259. 7 consecutive transmembrane segments (helical) span residues 287-307 (VSTKVFSTLFALLGLFTCFFG), 311-331 (WKTELFFVGFIFLGFFFYILI), 341-361 (VRLVLTAVAGSIGGLLLVASW), 364-384 (FGILTLCMLCVGLVLGFLVSS), 402-422 (VFWVTFSCIALLVPVIFLGCL), 427-447 (ILACGIVGSYSVVLAINSYMF), and 478-498 (NDYIILAVWGMLAVTGITLQI).

The protein resides in the cell membrane. Functionally, involved in the inhibition of cytokine-induced death of pancreatic beta cells. Involved in the promotion of insulin secretion from pancreatic beta cells. Is a downstream transcriptional target of p53/TP53, and acts as a pro-survival homeostatic factor that attenuates the development of cellular stress. Maintains protein homeostasis and promotes cell survival through attenuation of endoplasmic reticulum (ER) stress and the subsequent induction of unfolded protein response (UPR). This is Transmembrane 7 superfamily member 3 (Tm7sf3) from Rattus norvegicus (Rat).